Here is a 78-residue protein sequence, read N- to C-terminus: Acyl carrier protein (78 aa).

Residues Ser2–Ala77 enclose the Carrier domain. Ser37 carries the post-translational modification O-(pantetheine 4'-phosphoryl)serine.

The protein belongs to the acyl carrier protein (ACP) family. 4'-phosphopantetheine is transferred from CoA to a specific serine of apo-ACP by AcpS. This modification is essential for activity because fatty acids are bound in thioester linkage to the sulfhydryl of the prosthetic group.

The protein resides in the cytoplasm. Its pathway is lipid metabolism; fatty acid biosynthesis. Its function is as follows. Carrier of the growing fatty acid chain in fatty acid biosynthesis. The protein is Acyl carrier protein of Bacteroides thetaiotaomicron (strain ATCC 29148 / DSM 2079 / JCM 5827 / CCUG 10774 / NCTC 10582 / VPI-5482 / E50).